Reading from the N-terminus, the 325-residue chain is Glutaminase (325 aa).

Serine 76, asparagine 125, glutamate 169, asparagine 176, tyrosine 200, tyrosine 252, and valine 270 together coordinate substrate.

Belongs to the glutaminase family. As to quaternary structure, homotetramer.

It carries out the reaction L-glutamine + H2O = L-glutamate + NH4(+). This chain is Glutaminase, found in Clavibacter michiganensis subsp. michiganensis (strain NCPPB 382).